A 56-amino-acid polypeptide reads, in one-letter code: Protein hunchback (56 aa).

3 C2H2-type zinc fingers span residues 1–5 (HLRNH), 11–33 (FKCD…LKSH), and 39–56 (FRCS…SLKL).

It belongs to the hunchback C2H2-type zinc-finger protein family.

It is found in the nucleus. In terms of biological role, gap class segmentation protein that controls development of head structures. The polypeptide is Protein hunchback (hb) (Euscelis plebejus (Leafhopper)).